The sequence spans 231 residues: MINSRQTLDLKLFAASPGEPVDWRRSDQPVPYPGAVDAMERRAAAIASSEAAEQVWLLEHPPLYTCGTSGREADLVKARFPLFSTGRGGQITYHGPGQRIAYVMLDLKRRRPDVREFIACLEEWIIRTLDAFGVKGERREDRVGVWVARPDKGPGHEDKIAAIGVRLRRWVSFHGVSLNVDPDLSHFADIVPCGVSDPRYGVTSLADLGLRVRLTDIDQALKRTFSEVFGS.

Positions 49–231 constitute a BPL/LPL catalytic domain; that stretch reads SEAAEQVWLL…KRTFSEVFGS (183 aa). Residues 87–94, 162–164, and 175–177 each bind substrate; these read RGGQITYH, AIG, and GVS. Cysteine 193 serves as the catalytic Acyl-thioester intermediate.

It belongs to the LipB family.

Its subcellular location is the cytoplasm. The enzyme catalyses octanoyl-[ACP] + L-lysyl-[protein] = N(6)-octanoyl-L-lysyl-[protein] + holo-[ACP] + H(+). It functions in the pathway protein modification; protein lipoylation via endogenous pathway; protein N(6)-(lipoyl)lysine from octanoyl-[acyl-carrier-protein]: step 1/2. Catalyzes the transfer of endogenously produced octanoic acid from octanoyl-acyl-carrier-protein onto the lipoyl domains of lipoate-dependent enzymes. Lipoyl-ACP can also act as a substrate although octanoyl-ACP is likely to be the physiological substrate. This Nitrobacter winogradskyi (strain ATCC 25391 / DSM 10237 / CIP 104748 / NCIMB 11846 / Nb-255) protein is Octanoyltransferase.